The following is a 471-amino-acid chain: Ribulose bisphosphate carboxylase large chain (471 aa).

2 residues coordinate substrate: asparagine 115 and threonine 165. Lysine 167 functions as the Proton acceptor in the catalytic mechanism. Residue lysine 169 participates in substrate binding. Positions 193, 195, and 196 each coordinate Mg(2+). N6-carboxylysine is present on lysine 193. Histidine 286 (proton acceptor) is an active-site residue. Residues arginine 287, histidine 319, and serine 371 each coordinate substrate.

This sequence belongs to the RuBisCO large chain family. Type I subfamily. In terms of assembly, heterohexadecamer of 8 large chains and 8 small chains. It depends on Mg(2+) as a cofactor.

It is found in the carboxysome. It carries out the reaction 2 (2R)-3-phosphoglycerate + 2 H(+) = D-ribulose 1,5-bisphosphate + CO2 + H2O. It catalyses the reaction D-ribulose 1,5-bisphosphate + O2 = 2-phosphoglycolate + (2R)-3-phosphoglycerate + 2 H(+). Its function is as follows. RuBisCO catalyzes two reactions: the carboxylation of D-ribulose 1,5-bisphosphate, the primary event in carbon dioxide fixation, as well as the oxidative fragmentation of the pentose substrate in the photorespiration process. Both reactions occur simultaneously and in competition at the same active site. This Synechococcus sp. (strain WH7803) protein is Ribulose bisphosphate carboxylase large chain.